The primary structure comprises 327 residues: HTH-type transcriptional regulator EbgR (327 aa).

Positions 1-57 (MATLKDIAIEAGVSLATVSRVLNDDPTLNVKEETKHRILEIAEKLEYKTSSARKLQT) constitute an HTH lacI-type domain. The segment at residues 4–23 (LKDIAIEAGVSLATVSRVLN) is a DNA-binding region (H-T-H motif).

Functionally, repressor for beta galactosidase alpha and beta subunits (ebgA and ebgC). Binds lactose as an inducer. In Escherichia coli (strain K12), this protein is HTH-type transcriptional regulator EbgR (ebgR).